The following is a 135-amino-acid chain: UPF0355 protein SAV0387 (135 aa).

Belongs to the UPF0355 family.

The polypeptide is UPF0355 protein SAV0387 (Staphylococcus aureus (strain Mu50 / ATCC 700699)).